Here is a 607-residue protein sequence, read N- to C-terminus: Matrix metalloproteinase-16 (607 aa).

The first 31 residues, 1–31 (MILLAFSSGRRLDFVHRSGVFFLQTLLWILC), serve as a signal peptide directing secretion. The propeptide occupies 32–119 (ATVCGTEQYF…SSKFNIRRKR (88 aa)). N-linked (GlcNAc...) asparagine glycosylation occurs at Asn83. A Cysteine switch motif is present at residues 99–106 (PRCGVPDQ). Zn(2+) is bound at residue Cys101. The Extracellular portion of the chain corresponds to 120–564 (YALTGQKWQH…LDNTASTVKA (445 aa)). Position 183 (Asp183) interacts with Ca(2+). The Zn(2+) site is built by His193 and Asp195. Positions 200, 201, 203, and 205 each coordinate Ca(2+). Residue His208 participates in Zn(2+) binding. Residues Gly215, Gly217, and Asp219 each contribute to the Ca(2+) site. Residue His221 participates in Zn(2+) binding. Residues Asp223 and Glu226 each contribute to the Ca(2+) site. His246 lines the Zn(2+) pocket. The active site involves Glu247. 2 residues coordinate Zn(2+): His250 and His256. A disordered region spans residues 281 to 340 (DDLQGIQKIYGPPDKIPPPTRPLPTVPPHRSVPPADPRRHDRPKPPRPPTGRPSYPGAKP). Residues 294 to 315 (DKIPPPTRPLPTVPPHRSVPPA) show a composition bias toward pro residues. Hemopexin repeat units follow at residues 340–388 (PNIC…WRGL), 389–434 (PPSI…GNGI), 436–484 (PHGI…KGIP), and 485–532 (ESPQ…FMGC). Cys343 and Cys532 are disulfide-bonded. Residues 565–585 (IAIVIPCILALCLLVLVYTVF) form a helical membrane-spanning segment. Over 586 to 607 (QFKRKGTPRHILYCKRSMQEWV) the chain is Cytoplasmic.

This sequence belongs to the peptidase M10A family. Interacts with CSPG4 through CSPG4 chondroitin sulfate glycosaminoglycan. Zn(2+) serves as cofactor. The cofactor is Ca(2+). Post-translationally, the precursor is cleaved by a furin endopeptidase.

Its subcellular location is the cell membrane. Its function is as follows. Endopeptidase that degrades various components of the extracellular matrix, such as collagen type III and fibronectin. Activates progelatinase A. Involved in the matrix remodeling of blood vessels. It has no effect on type I, II, IV and V collagen. However, upon interaction with CSPG4, it may be involved in degradation and invasion of type I collagen by melanoma cells. The polypeptide is Matrix metalloproteinase-16 (Mmp16) (Mus musculus (Mouse)).